A 142-amino-acid chain; its full sequence is MAPKKKVAGLIKLQIVAGQANPAPPVGPALGQHGVNIMEFCKAYNAATESQRGTVIPVEITVYEDRSFTFALKTPPAAKLLLKAAGVAKGSAEPHKTKVAKVTWDQVREIAETKKTDLNANDIDAAAKIIAGTARSMGITVE.

It belongs to the universal ribosomal protein uL11 family. In terms of assembly, part of the ribosomal stalk of the 50S ribosomal subunit. Interacts with L10 and the large rRNA to form the base of the stalk. L10 forms an elongated spine to which L12 dimers bind in a sequential fashion forming a multimeric L10(L12)X complex. In terms of processing, one or more lysine residues are methylated.

Functionally, forms part of the ribosomal stalk which helps the ribosome interact with GTP-bound translation factors. This is Large ribosomal subunit protein uL11 from Mycobacterium ulcerans (strain Agy99).